A 256-amino-acid polypeptide reads, in one-letter code: Pimeloyl-[acyl-carrier protein] methyl ester esterase (256 aa).

The AB hydrolase-1 domain occupies 15 to 242 (HLVLLHGWGL…AAHAPFISHP (228 aa)). Residues Trp-22, 82–83 (SL), and 143–147 (FLALQ) contribute to the substrate site. Ser-82 serves as the catalytic Nucleophile. Active-site residues include Asp-207 and His-235. His-235 lines the substrate pocket.

The protein belongs to the AB hydrolase superfamily. Carboxylesterase BioH family. As to quaternary structure, monomer.

It is found in the cytoplasm. It carries out the reaction 6-carboxyhexanoyl-[ACP] methyl ester + H2O = 6-carboxyhexanoyl-[ACP] + methanol + H(+). It functions in the pathway cofactor biosynthesis; biotin biosynthesis. The physiological role of BioH is to remove the methyl group introduced by BioC when the pimeloyl moiety is complete. It allows to synthesize pimeloyl-ACP via the fatty acid synthetic pathway through the hydrolysis of the ester bonds of pimeloyl-ACP esters. The protein is Pimeloyl-[acyl-carrier protein] methyl ester esterase of Salmonella choleraesuis (strain SC-B67).